The sequence spans 825 residues: Leucine-rich repeat and guanylate kinase domain-containing protein (825 aa).

The segment at 73 to 96 (DSDGDEDQGEGEAGSEESSESEML) is disordered. LRR repeat units follow at residues 129-149 (YLNLTLSGCNLIDVSILCGYV), 150-171 (HLQKLDLSANKIEDLSCVSCMP), 172-193 (YLLELNASQNNLTTFFNFKPPK), 194-215 (NLKKADFSHNQISEICDLSAYH), 216-237 (ALTKLILDGNEIEEISGLEMCN), 238-259 (NLIHLSLANNKITTINGLNKLP), 260-280 (IKILCLSNNQIEMITGLEDLK), 281-302 (ALQNLDLSHNQISSLQGLENHD), and 303-324 (LLEVINLEDNKIAELREIEYIK). Residues 337–375 (NPIQEKSEYWFFVIFMLLRLTELDQKKIKVEEKVSAVNK) enclose the LRRCT domain. Residues 414–597 (YPMLILAGPE…AYQKLSQLIR (184 aa)) enclose the Guanylate kinase-like domain. An ATP-binding site is contributed by 421–428 (GPEACGKR). Positions 760–825 (PEGSISSHLG…TLPPIPQGRR (66 aa)) are disordered. Residues 763–774 (SISSHLGSGASD) are compositionally biased toward polar residues. Over residues 816-825 (TLPPIPQGRR) the composition is skewed to pro residues.

As to quaternary structure, interacts (via guanylate kinase-like domain) with RIMBP3 (via coiled-coil region). Interacts (via guanylate kinase-like domain) with HOOK2. Interacts (via LRRCT domain) with KLC3. Interacts with HOOK1 and HOOK3.

The protein resides in the cytoplasmic vesicle. It is found in the secretory vesicle. The protein localises to the acrosome. It localises to the cytoplasm. Its subcellular location is the cytoskeleton. The protein resides in the cilium basal body. In terms of biological role, involved in multiple aspects of sperm assembly including acrosome attachment, shaping of the sperm head and in the early aspects of axoneme development. Not essential for primary cilium biogenesis. This chain is Leucine-rich repeat and guanylate kinase domain-containing protein (LRGUK), found in Homo sapiens (Human).